Reading from the N-terminus, the 123-residue chain is NADH-quinone oxidoreductase subunit A (123 aa).

Helical transmembrane passes span 11-31 (YLPIAIFFGIAVLVSGLIMML), 68-88 (LVAILFIIFDLEITFLVPWAI), and 93-113 (IGKIGFFSMMFFLFVLIIGFI).

Belongs to the complex I subunit 3 family. As to quaternary structure, NDH-1 is composed of 14 different subunits. Subunits NuoA, H, J, K, L, M, N constitute the membrane sector of the complex.

The protein localises to the cell inner membrane. It carries out the reaction a quinone + NADH + 5 H(+)(in) = a quinol + NAD(+) + 4 H(+)(out). Functionally, NDH-1 shuttles electrons from NADH, via FMN and iron-sulfur (Fe-S) centers, to quinones in the respiratory chain. The immediate electron acceptor for the enzyme in this species is believed to be ubiquinone. Couples the redox reaction to proton translocation (for every two electrons transferred, four hydrogen ions are translocated across the cytoplasmic membrane), and thus conserves the redox energy in a proton gradient. This is NADH-quinone oxidoreductase subunit A from Rickettsia typhi (strain ATCC VR-144 / Wilmington).